Here is a 318-residue protein sequence, read N- to C-terminus: uncharacterized protein (318 aa).

4 helical membrane passes run 112–132 (VIGVLSFLFSKFVFTLVPVFL), 147–167 (IAIESLFKLILLLGYIYFLSM), 209–229 (CGSSFILFTIIVGMFVYLLVP), and 237–257 (VIDRVALIPVVLGISFEVLQL).

The protein resides in the cell membrane. This is an uncharacterized protein from Bacillus subtilis (strain 168).